Here is a 118-residue protein sequence, read N- to C-terminus: Large ribosomal subunit protein bL19 (118 aa).

It belongs to the bacterial ribosomal protein bL19 family.

In terms of biological role, this protein is located at the 30S-50S ribosomal subunit interface and may play a role in the structure and function of the aminoacyl-tRNA binding site. This chain is Large ribosomal subunit protein bL19, found in Campylobacter jejuni subsp. doylei (strain ATCC BAA-1458 / RM4099 / 269.97).